The sequence spans 166 residues: Putative transcriptional regulatory protein for hcr operon (166 aa).

Positions 1 to 155 (MRKHRGKPAN…LIGLLKRLYR (155 aa)) constitute an HTH marR-type domain.

Functionally, may be involved in the regulation of genes for 4-hydroxybenzoyl-CoA reductase. This chain is Putative transcriptional regulatory protein for hcr operon, found in Thauera aromatica.